Consider the following 204-residue polypeptide: Urease accessory protein UreE (204 aa).

A compositionally biased stretch (basic and acidic residues) spans 172–190 (HGHAHSHDHDHDHDHDHQH). The tract at residues 172-204 (HGHAHSHDHDHDHDHDHQHGPGCTHGHHGHDHH) is disordered.

This sequence belongs to the UreE family.

Its subcellular location is the cytoplasm. Functionally, involved in urease metallocenter assembly. Binds nickel. Probably functions as a nickel donor during metallocenter assembly. The polypeptide is Urease accessory protein UreE (Burkholderia orbicola (strain AU 1054)).